A 270-amino-acid polypeptide reads, in one-letter code: Electron transfer flavoprotein subunit beta (270 aa).

It belongs to the ETF alpha-subunit/FixB family. As to quaternary structure, heterodimer of an alpha and a beta subunit. FAD serves as cofactor.

Functionally, the electron transfer flavoprotein serves as a specific electron acceptor for other dehydrogenases. It transfers the electrons to the main respiratory chain via ETF-ubiquinone oxidoreductase (ETF dehydrogenase). This Megasphaera elsdenii protein is Electron transfer flavoprotein subunit beta (etfB).